A 511-amino-acid polypeptide reads, in one-letter code: 2,3-bisphosphoglycerate-independent phosphoglycerate mutase (511 aa).

Mn(2+)-binding residues include Asp14 and Ser64. Ser64 serves as the catalytic Phosphoserine intermediate. Substrate contacts are provided by residues His125, 155-156 (RD), Arg187, Arg193, 259-262 (RADR), and Lys333. Mn(2+)-binding residues include Asp400, His404, Asp441, His442, and His460.

It belongs to the BPG-independent phosphoglycerate mutase family. As to quaternary structure, monomer. Mn(2+) is required as a cofactor.

It carries out the reaction (2R)-2-phosphoglycerate = (2R)-3-phosphoglycerate. Its pathway is carbohydrate degradation; glycolysis; pyruvate from D-glyceraldehyde 3-phosphate: step 3/5. Its function is as follows. Catalyzes the interconversion of 2-phosphoglycerate and 3-phosphoglycerate. The sequence is that of 2,3-bisphosphoglycerate-independent phosphoglycerate mutase from Pseudomonas putida (strain GB-1).